The primary structure comprises 252 residues: Small ribosomal subunit protein uS3 (252 aa).

Residues 39–110 (IRKALMKELK…EVKINVVEIK (72 aa)) enclose the KH type-2 domain. The segment at 218-252 (TSDEKPKFEKRDFNRSNNNRRDQAPKSHPVAKEAK) is disordered. A compositionally biased stretch (basic and acidic residues) spans 219 to 252 (SDEKPKFEKRDFNRSNNNRRDQAPKSHPVAKEAK).

This sequence belongs to the universal ribosomal protein uS3 family. Part of the 30S ribosomal subunit. Forms a tight complex with proteins S10 and S14.

In terms of biological role, binds the lower part of the 30S subunit head. Binds mRNA in the 70S ribosome, positioning it for translation. This is Small ribosomal subunit protein uS3 from Spiroplasma citri.